We begin with the raw amino-acid sequence, 258 residues long: tRNA pseudouridine synthase A (258 aa).

The active-site Nucleophile is the Asp-53. Tyr-111 serves as a coordination point for substrate.

This sequence belongs to the tRNA pseudouridine synthase TruA family. Homodimer.

It carries out the reaction uridine(38/39/40) in tRNA = pseudouridine(38/39/40) in tRNA. Functionally, formation of pseudouridine at positions 38, 39 and 40 in the anticodon stem and loop of transfer RNAs. This is tRNA pseudouridine synthase A from Streptococcus agalactiae serotype V (strain ATCC BAA-611 / 2603 V/R).